Reading from the N-terminus, the 473-residue chain is MKTLYSLRRFYHVETLFNGTLALAGRDQETTGFAWWAGNARLINLSGKLLGAHVAHAGLIVFWAGAMNLFEVAHFVPEKPMYEQGLILLPHLATLGWGVGPGGEVLDTFPYFVSGVLHLISSAVLGFGGIYHALLGPETLEESFPFFGYVWKDRNKMTTILGIHLILLGLGAFLLVFKALYFGGVYDTWAPGGGDVRKITNLTLSPSIIFGYLLKSPFGGEGWIVSVDDLEDIVGGHVWLGSICILGGIWHILTKPFAWARRAFVWSGEAYLSYSLGALAIFGFTACCFVWFNNTAYPSEFYGPTGPEASQAQAFTFLVRDQRLGANVGSAQGPTGLGKYLMRSPTGEVIFGGETMRFWDLRAPWLEPLRGPNGLDLSRLKKDIQPWQERRSAEYMTHAPLGSLNSVGGVATEINAVNYVSPRSWLATSHFVLGFFFFVGHLWHAGRARAAAAGFEKGIDRDFEPVLSMTPLN.

Residues 1–14 constitute a propeptide that is removed on maturation; that stretch reads MKTLYSLRRFYHVE. Thr-15 is subject to N-acetylthreonine. Thr-15 carries the post-translational modification Phosphothreonine. 5 helical membrane-spanning segments follow: residues 69-93, 134-155, 178-200, 255-275, and 291-312; these read LFEV…PHLA, LLGP…KDRN, KALY…RKIT, KPFA…LSYS, and WFNN…ASQA. Position 367 (Glu-367) interacts with [CaMn4O5] cluster. Residues 447–471 form a helical membrane-spanning segment; sequence RARAAAAGFEKGIDRDFEPVLSMTP.

It belongs to the PsbB/PsbC family. PsbC subfamily. PSII is composed of 1 copy each of membrane proteins PsbA, PsbB, PsbC, PsbD, PsbE, PsbF, PsbH, PsbI, PsbJ, PsbK, PsbL, PsbM, PsbT, PsbX, PsbY, PsbZ, Psb30/Ycf12, at least 3 peripheral proteins of the oxygen-evolving complex and a large number of cofactors. It forms dimeric complexes. Binds multiple chlorophylls and provides some of the ligands for the Ca-4Mn-5O cluster of the oxygen-evolving complex. It may also provide a ligand for a Cl- that is required for oxygen evolution. PSII binds additional chlorophylls, carotenoids and specific lipids. is required as a cofactor.

The protein localises to the plastid. Its subcellular location is the chloroplast thylakoid membrane. One of the components of the core complex of photosystem II (PSII). It binds chlorophyll and helps catalyze the primary light-induced photochemical processes of PSII. PSII is a light-driven water:plastoquinone oxidoreductase, using light energy to abstract electrons from H(2)O, generating O(2) and a proton gradient subsequently used for ATP formation. The chain is Photosystem II CP43 reaction center protein from Ipomoea purpurea (Common morning glory).